Here is a 276-residue protein sequence, read N- to C-terminus: Formamidopyrimidine-DNA glycosylase (276 aa).

Pro2 acts as the Schiff-base intermediate with DNA in catalysis. Glu3 (proton donor) is an active-site residue. Lys60 (proton donor; for beta-elimination activity) is an active-site residue. His93 and Arg112 together coordinate DNA. The FPG-type zinc-finger motif lies at 240-274 (NVYGKKGEPCVTCGTILEKTVVGGRGTHYCPICQP). The Proton donor; for delta-elimination activity role is filled by Arg264.

It belongs to the FPG family. Monomer. It depends on Zn(2+) as a cofactor.

It catalyses the reaction Hydrolysis of DNA containing ring-opened 7-methylguanine residues, releasing 2,6-diamino-4-hydroxy-5-(N-methyl)formamidopyrimidine.. The enzyme catalyses 2'-deoxyribonucleotide-(2'-deoxyribose 5'-phosphate)-2'-deoxyribonucleotide-DNA = a 3'-end 2'-deoxyribonucleotide-(2,3-dehydro-2,3-deoxyribose 5'-phosphate)-DNA + a 5'-end 5'-phospho-2'-deoxyribonucleoside-DNA + H(+). Functionally, involved in base excision repair of DNA damaged by oxidation or by mutagenic agents. Acts as a DNA glycosylase that recognizes and removes damaged bases. Has a preference for oxidized purines, such as 7,8-dihydro-8-oxoguanine (8-oxoG). Has AP (apurinic/apyrimidinic) lyase activity and introduces nicks in the DNA strand. Cleaves the DNA backbone by beta-delta elimination to generate a single-strand break at the site of the removed base with both 3'- and 5'-phosphates. The polypeptide is Formamidopyrimidine-DNA glycosylase (Bacillus anthracis).